Here is a 238-residue protein sequence, read N- to C-terminus: Ribonuclease PH (238 aa).

Residues R86 and 124–126 contribute to the phosphate site; that span reads GTR.

It belongs to the RNase PH family. Homohexameric ring arranged as a trimer of dimers.

The enzyme catalyses tRNA(n+1) + phosphate = tRNA(n) + a ribonucleoside 5'-diphosphate. Functionally, phosphorolytic 3'-5' exoribonuclease that plays an important role in tRNA 3'-end maturation. Removes nucleotide residues following the 3'-CCA terminus of tRNAs; can also add nucleotides to the ends of RNA molecules by using nucleoside diphosphates as substrates, but this may not be physiologically important. Probably plays a role in initiation of 16S rRNA degradation (leading to ribosome degradation) during starvation. The polypeptide is Ribonuclease PH (Haemophilus ducreyi (strain 35000HP / ATCC 700724)).